A 490-amino-acid polypeptide reads, in one-letter code: UDP-glucosyl transferase 73M2 (490 aa).

The Proton acceptor role is filled by histidine 20. Residue aspartate 124 is the Charge relay of the active site. Residues serine 297, tryptophan 353, alanine 354, histidine 371, asparagine 375, serine 376, glutamate 379, and tyrosine 393 each contribute to the UDP site.

Belongs to the UDP-glycosyltransferase family. In terms of tissue distribution, mainly expressed in flowers, flower buds and young leaves, and, to a lesser extent, in old leaves, stems and roots.

The protein operates within secondary metabolite biosynthesis; terpenoid biosynthesis. Component of the oleanane-type triterpene saponins (e.g. saponarioside A and saponarioside B) biosynthetic pathway, leading to the production of natural products with detergent properties used as traditional sources of soap. A glycosyltransferase that mediates the conversion of QA-triFRX to QA-triFRXX via the elongation of the C-28 sugar chain with a D-xylose. The polypeptide is UDP-glucosyl transferase 73M2 (Saponaria officinalis (Common soapwort)).